The primary structure comprises 315 residues: WD repeat domain-containing protein 83 (315 aa).

WD repeat units lie at residues 23–62 (CSQGAVRAVRFNVDGNYCLTCGSDKTLKLWNPLRGTLLRT), 65–104 (GHGYEVLDAAGSFDNSHLCSGGGDKTVVLWDVATGQVVRK), 107–146 (GHAGKVNTVQFNEEATVILSGSIDSSVRCWDCRSRKPEPV), 151–188 (EARDGISSVKVSDHEILAGSVDGRVRRYDLRMGQVSSD), 190–228 (VGSPITCTCFSRDGQCTLISSLDSTLRLLDKDTGELLGE), 231–272 (GHKN…LALA), and 275–313 (VGSNVVQSLAYHPTEPCLLTAMGGSIQYWREETYEAEGG).

Belongs to the WD repeat MORG1 family. In terms of assembly, interacts with EGLN3/PHD3. Interacts with ERK signaling proteins MAP2K1/MEK1, MAP2K2/MEK2, LAMTOR3, ARAF/Raf-1, MAPK1/ERK2 and MAPK3/ERK1. Identified in the spliceosome C complex. Interacts with PARD6B and CRB3. Interacts strongly with GTP-bound RRAGA but not with inactive GDP-bound. Interacts with p62/SQSTM1. As to expression, ubiquitous.

The protein localises to the cytoplasm. It is found in the lysosome. Its subcellular location is the nucleus. Molecular scaffold protein for various multimeric protein complexes. Acts as a module in the assembly of a multicomponent scaffold for the ERK pathway, linking ERK responses to specific agonists. At low concentrations it enhances ERK activation, whereas high concentrations lead to the inhibition of ERK activation. Also involved in response to hypoxia by acting as a negative regulator of HIF1A/HIF-1-alpha via its interaction with EGLN3/PHD3. May promote degradation of HIF1A. May act by recruiting signaling complexes to a specific upstream activator. May also be involved in pre-mRNA splicing. Participates in tight junction development by regulating apico-basal polarity, a key step in tissue development and organization. Mechanistically, regulates the translocation of PAR6-aPKC from the cytoplasm to the apical surface by acting as an adapter between PARD6B AND CRB3. Also acts as a negative regulator of mTORC1 under nutrient-rich conditions by binding to the active Rag GTPases to inhibit mTORC1 localization to the lysosome and phosphorylation of downstream targets. This facilitates constitutive basal autophagy during nutrient availability. The sequence is that of WD repeat domain-containing protein 83 (Wdr83) from Mus musculus (Mouse).